The primary structure comprises 64 residues: Large ribosomal subunit protein bL35 (64 aa).

Positions 38–53 (KRKANLNAPKHVHHTN) are enriched in basic residues. The disordered stretch occupies residues 38–64 (KRKANLNAPKHVHHTNAHSVMSLLCRA).

It belongs to the bacterial ribosomal protein bL35 family.

This chain is Large ribosomal subunit protein bL35, found in Helicobacter pylori (strain G27).